Reading from the N-terminus, the 141-residue chain is Small ribosomal subunit protein bS6 (141 aa).

Residues Val-96 to Ser-141 are disordered. Residues Ala-123–Ser-141 show a composition bias toward low complexity.

This sequence belongs to the bacterial ribosomal protein bS6 family.

Its function is as follows. Binds together with bS18 to 16S ribosomal RNA. This is Small ribosomal subunit protein bS6 from Verminephrobacter eiseniae (strain EF01-2).